The primary structure comprises 219 residues: Lipoprotein-releasing system ATP-binding protein LolD (219 aa).

Residues 5–219 form the ABC transporter domain; that stretch reads LKAGDIFKTY…KVVMQDGVII (215 aa). Residue 37 to 44 participates in ATP binding; the sequence is GASGAGKS.

It belongs to the ABC transporter superfamily. Lipoprotein translocase (TC 3.A.1.125) family. The complex is composed of two ATP-binding proteins (LolD) and two transmembrane proteins (LolC and LolE).

It localises to the cell inner membrane. Its function is as follows. Part of the ABC transporter complex LolCDE involved in the translocation of mature outer membrane-directed lipoproteins, from the inner membrane to the periplasmic chaperone, LolA. Responsible for the formation of the LolA-lipoprotein complex in an ATP-dependent manner. The chain is Lipoprotein-releasing system ATP-binding protein LolD from Cytophaga hutchinsonii (strain ATCC 33406 / DSM 1761 / CIP 103989 / NBRC 15051 / NCIMB 9469 / D465).